Here is a 340-residue protein sequence, read N- to C-terminus: DNA polymerase III subunit delta' (340 aa).

As to quaternary structure, the DNA polymerase holoenzyme is a complex that contains 10 different types of subunits. These subunits are organized into 3 functionally essential subassemblies: the pol III core, the beta sliding clamp processivity factor and the clamp-loading complex. The pol III core (subunits alpha,epsilon and theta) contains the polymerase and the 3'-5' exonuclease proofreading activities. The polymerase is tethered to the template via the sliding clamp processivity factor. The clamp-loading complex assembles the beta processivity factor onto the primer template and plays a central role in the organization and communication at the replication fork. This complex contains delta, delta', psi and chi, and copies of either or both of two different DnaX proteins, gamma and tau. The composition of the holoenzyme is, therefore: (alpha,epsilon,theta)[2]-(gamma/tau)[3]-delta,delta', psi,chi-beta[4].

The catalysed reaction is DNA(n) + a 2'-deoxyribonucleoside 5'-triphosphate = DNA(n+1) + diphosphate. DNA polymerase III is a complex, multichain enzyme responsible for most of the replicative synthesis in bacteria. This DNA polymerase also exhibits 3' to 5' exonuclease activity. This Yersinia pestis protein is DNA polymerase III subunit delta' (holB).